We begin with the raw amino-acid sequence, 275 residues long: Ribosomal RNA small subunit methyltransferase A (275 aa).

S-adenosyl-L-methionine-binding residues include Asn21, Leu23, Gly48, Glu69, Asp94, and Asn115.

Belongs to the class I-like SAM-binding methyltransferase superfamily. rRNA adenine N(6)-methyltransferase family. RsmA subfamily.

The protein resides in the cytoplasm. The enzyme catalyses adenosine(1518)/adenosine(1519) in 16S rRNA + 4 S-adenosyl-L-methionine = N(6)-dimethyladenosine(1518)/N(6)-dimethyladenosine(1519) in 16S rRNA + 4 S-adenosyl-L-homocysteine + 4 H(+). Specifically dimethylates two adjacent adenosines (A1518 and A1519) in the loop of a conserved hairpin near the 3'-end of 16S rRNA in the 30S particle. May play a critical role in biogenesis of 30S subunits. The polypeptide is Ribosomal RNA small subunit methyltransferase A (Clostridium botulinum (strain Okra / Type B1)).